The primary structure comprises 302 residues: Sulfate adenylyltransferase subunit 2 (302 aa).

The disordered stretch occupies residues 280 to 302 (RQGRVIDHDSSGSMEKKKREGYF).

This sequence belongs to the PAPS reductase family. CysD subfamily. Heterodimer composed of CysD, the smaller subunit, and CysN.

The enzyme catalyses sulfate + ATP + H(+) = adenosine 5'-phosphosulfate + diphosphate. The protein operates within sulfur metabolism; hydrogen sulfide biosynthesis; sulfite from sulfate: step 1/3. In terms of biological role, with CysN forms the ATP sulfurylase (ATPS) that catalyzes the adenylation of sulfate producing adenosine 5'-phosphosulfate (APS) and diphosphate, the first enzymatic step in sulfur assimilation pathway. APS synthesis involves the formation of a high-energy phosphoric-sulfuric acid anhydride bond driven by GTP hydrolysis by CysN coupled to ATP hydrolysis by CysD. This Shewanella amazonensis (strain ATCC BAA-1098 / SB2B) protein is Sulfate adenylyltransferase subunit 2.